We begin with the raw amino-acid sequence, 87 residues long: Exodeoxyribonuclease 7 small subunit (87 aa).

The protein belongs to the XseB family. Heterooligomer composed of large and small subunits.

Its subcellular location is the cytoplasm. The catalysed reaction is Exonucleolytic cleavage in either 5'- to 3'- or 3'- to 5'-direction to yield nucleoside 5'-phosphates.. Its function is as follows. Bidirectionally degrades single-stranded DNA into large acid-insoluble oligonucleotides, which are then degraded further into small acid-soluble oligonucleotides. This Xanthomonas campestris pv. campestris (strain 8004) protein is Exodeoxyribonuclease 7 small subunit.